Consider the following 517-residue polypeptide: Protein translocase subunit SecD (517 aa).

6 helical membrane-spanning segments follow: residues 5-25 (LRWI…FPLD), 357-377 (IWAG…YYKF), 380-400 (FIAS…MGMF), 407-427 (PGIA…VLIF), 455-475 (IIDS…FGTG), and 479-499 (GFAV…VTLS).

It belongs to the SecD/SecF family. SecD subfamily. As to quaternary structure, forms a complex with SecF. Part of the essential Sec protein translocation apparatus which comprises SecA, SecYEG and auxiliary proteins SecDF. Other proteins may also be involved.

Its subcellular location is the cell inner membrane. In terms of biological role, part of the Sec protein translocase complex. Interacts with the SecYEG preprotein conducting channel. SecDF uses the proton motive force (PMF) to complete protein translocation after the ATP-dependent function of SecA. This is Protein translocase subunit SecD from Calditerrivibrio nitroreducens (strain DSM 19672 / NBRC 101217 / Yu37-1).